The primary structure comprises 152 residues: Aspartate carbamoyltransferase regulatory chain (152 aa).

Zn(2+) contacts are provided by Cys107, Cys112, Cys136, and Cys139.

It belongs to the PyrI family. Contains catalytic and regulatory chains. Zn(2+) serves as cofactor.

Its function is as follows. Involved in allosteric regulation of aspartate carbamoyltransferase. This chain is Aspartate carbamoyltransferase regulatory chain, found in Chromobacterium violaceum (strain ATCC 12472 / DSM 30191 / JCM 1249 / CCUG 213 / NBRC 12614 / NCIMB 9131 / NCTC 9757 / MK).